The primary structure comprises 299 residues: Probable lipid kinase YegS (299 aa).

The region spanning 2–133 (ANFPASLLIL…IDMARVNDKT (132 aa)) is the DAGKc domain. Residues Thr-40, 66–72 (GDGTINE), and Thr-95 each bind ATP. Residues Leu-215, Asp-218, and Leu-220 each contribute to the Mg(2+) site. Residue Glu-271 is the Proton acceptor of the active site.

Belongs to the diacylglycerol/lipid kinase family. YegS lipid kinase subfamily. Mg(2+) is required as a cofactor. The cofactor is Ca(2+).

The protein localises to the cytoplasm. Its function is as follows. Probably phosphorylates lipids; the in vivo substrate is unknown. This is Probable lipid kinase YegS from Salmonella gallinarum (strain 287/91 / NCTC 13346).